The following is a 502-amino-acid chain: Probable cytosol aminopeptidase (502 aa).

Mn(2+) contacts are provided by lysine 269 and aspartate 274. Residue lysine 281 is part of the active site. Residues aspartate 292, aspartate 351, and glutamate 353 each contribute to the Mn(2+) site. Arginine 355 is a catalytic residue.

Belongs to the peptidase M17 family. The cofactor is Mn(2+).

The protein resides in the cytoplasm. It catalyses the reaction Release of an N-terminal amino acid, Xaa-|-Yaa-, in which Xaa is preferably Leu, but may be other amino acids including Pro although not Arg or Lys, and Yaa may be Pro. Amino acid amides and methyl esters are also readily hydrolyzed, but rates on arylamides are exceedingly low.. The enzyme catalyses Release of an N-terminal amino acid, preferentially leucine, but not glutamic or aspartic acids.. Its function is as follows. Presumably involved in the processing and regular turnover of intracellular proteins. Catalyzes the removal of unsubstituted N-terminal amino acids from various peptides. This Photobacterium profundum (strain SS9) protein is Probable cytosol aminopeptidase.